The primary structure comprises 389 residues: Mannitol-1-phosphate 5-dehydrogenase (389 aa).

5–16 contributes to the NAD(+) binding site; that stretch reads AVHFGAGNIGRG. Residue Lys-215 is part of the active site.

Belongs to the mannitol dehydrogenase family. In terms of assembly, monomer.

It carries out the reaction D-mannitol 1-phosphate + NAD(+) = beta-D-fructose 6-phosphate + NADH + H(+). Its function is as follows. Catalyzes the NAD(H)-dependent interconversion of D-fructose 6-phosphate and D-mannitol 1-phosphate in the mannitol metabolic pathway. The polypeptide is Mannitol-1-phosphate 5-dehydrogenase (Sclerotinia sclerotiorum (strain ATCC 18683 / 1980 / Ss-1) (White mold)).